Consider the following 93-residue polypeptide: Small ribosomal subunit protein bS16 (93 aa).

The protein belongs to the bacterial ribosomal protein bS16 family.

In Opitutus terrae (strain DSM 11246 / JCM 15787 / PB90-1), this protein is Small ribosomal subunit protein bS16.